Consider the following 118-residue polypeptide: uncharacterized protein (118 aa).

4 helical membrane passes run Ile-12–Phe-32, Leu-39–Ile-59, Ile-63–Ile-83, and Ser-98–Phe-118.

The protein localises to the cell membrane. This is an uncharacterized protein from Methanocaldococcus jannaschii (strain ATCC 43067 / DSM 2661 / JAL-1 / JCM 10045 / NBRC 100440) (Methanococcus jannaschii).